The sequence spans 805 residues: Phosphoinositide 3-kinase adapter protein 1 (805 aa).

Positions 8–145 constitute a TIR domain; sequence RGCDILIVYS…AVKKAISEDS (138 aa). A necessary and sufficient to mediate inhibition of NF-kappa-B downstream of activated TLRs; may mediate interaction with MYD88 and TIRAP region spans residues 10 to 144; the sequence is CDILIVYSPD…AAVKKAISED (135 aa). The interval 145-165 is disordered; sequence SGCDSVTDTEPEDEKVVSYSK. The 137-residue stretch at 181–317 folds into the DBB domain; it reads VQPDRIRCGA…NIPASGLHLF (137 aa). Residue Tyr-263 is modified to Phosphotyrosine. 3 positions are modified to phosphotyrosine; by SYK: Tyr-419, Tyr-444, and Tyr-459. Phosphotyrosine; by ABL1 is present on Tyr-513. The tract at residues 527–547 is disordered; that stretch reads ASRPPVPVPRPETTAPGAHQL. Residues Tyr-553 and Tyr-570 each carry the phosphotyrosine; by ABL1 modification. A disordered region spans residues 571-590; sequence VSSESIRKGPPVRPWRDRPQ. Tyr-594 carries the phosphotyrosine; by ABL1 modification. Ser-642 carries the post-translational modification Phosphoserine. Residues 645–667 are a coiled coil; the sequence is FQQENLKRLRDSITRRQREKQKS. Basic and acidic residues predominate over residues 654–672; that stretch reads RDSITRRQREKQKSGKQTD. The disordered stretch occupies residues 654–679; that stretch reads RDSITRRQREKQKSGKQTDLEITVPI. Residue Tyr-694 is modified to Phosphotyrosine; by ABL1. The segment at 697 to 805 is disordered; the sequence is GPRKSVIPPR…PPPPVPPRGR (109 aa). Over residues 707–716 the composition is skewed to basic and acidic residues; sequence TELRRGDWKT. Residues 717 to 740 are compositionally biased toward low complexity; sequence DSTSSTASSTSNRSSTRSLLSVSS. A Phosphoserine modification is found at Ser-718. A compositionally biased stretch (pro residues) spans 795–805; the sequence is HPPPPVPPRGR.

Homooligomer. Interacts (phosphorylated on tyrosine residues within YXXM motifs) with PIK3R1 (via SH2 domain); required for BCR- and TLR-mediated activation of phosphoinositide 3-kinase. Interacts (via polyproline C-terminal region) with ABI1 (via SH3 domain); the interaction promotes phosphorylation of PIK3AP1 by ABL1. May interact with MYD88 and TIRAP. Constitutively phosphorylated. Phosphorylated on tyrosine residues in C-terminal region by ABL1. Phosphorylated on tyrosine residues within the YXXM motifs by BTK and SYK. Isoform 1 and isoform 2 are phosphorylated on tyrosine residues, most likely within the YXXM motifs, via CD19 activation. Toll-like receptor activation induces appearance of a phosphorylated form associated with membranes. In terms of tissue distribution, expressed in natural killer (NK) cells.

It is found in the cytoplasm. Its subcellular location is the cell membrane. Functionally, signaling adapter that contributes to B-cell development by linking B-cell receptor (BCR) signaling to the phosphoinositide 3-kinase (PI3K)-Akt signaling pathway. Has a complementary role to the BCR coreceptor CD19, coupling BCR and PI3K activation by providing a docking site for the PI3K subunit PIK3R1. Alternatively, links Toll-like receptor (TLR) signaling to PI3K activation, a process preventing excessive inflammatory cytokine production. Also involved in the activation of PI3K in natural killer cells. May be involved in the survival of mature B-cells via activation of REL. This chain is Phosphoinositide 3-kinase adapter protein 1 (PIK3AP1), found in Homo sapiens (Human).